We begin with the raw amino-acid sequence, 221 residues long: PKHD-type hydroxylase PMN2A_0775 (221 aa).

Positions 80 to 174 constitute a Fe2OG dioxygenase domain; it reads LIHGVMFTQS…RHVCVGWIQS (95 aa). Positions 98, 100, and 155 each coordinate Fe cation. Residue Arg165 participates in 2-oxoglutarate binding.

Requires Fe(2+) as cofactor. L-ascorbate serves as cofactor.

This Prochlorococcus marinus (strain NATL2A) protein is PKHD-type hydroxylase PMN2A_0775.